A 348-amino-acid chain; its full sequence is Small ribosomal subunit protein mS45 (348 aa).

A compositionally biased stretch (low complexity) spans 37–57; that stretch reads SCSSSSPQSSQPTTHQQQCSS. Residues 37 to 63 form a disordered region; that stretch reads SCSSSSPQSSQPTTHQQQCSSFSTTAP.

The protein belongs to the mitochondrion-specific ribosomal protein mS45 family. Component of the mitochondrial small ribosomal subunit (mt-SSU). Mature N.crassa 74S mitochondrial ribosomes consist of a small (37S) and a large (54S) subunit. The 37S small subunit contains a 16S ribosomal RNA (16S mt-rRNA) and 32 different proteins. The 54S large subunit contains a 23S rRNA (23S mt-rRNA) and 42 different proteins.

The protein localises to the mitochondrion. Component of the mitochondrial ribosome (mitoribosome), a dedicated translation machinery responsible for the synthesis of mitochondrial genome-encoded proteins, including at least some of the essential transmembrane subunits of the mitochondrial respiratory chain. The mitoribosomes are attached to the mitochondrial inner membrane and translation products are cotranslationally integrated into the membrane. This chain is Small ribosomal subunit protein mS45 (mrps35), found in Neurospora crassa (strain ATCC 24698 / 74-OR23-1A / CBS 708.71 / DSM 1257 / FGSC 987).